The primary structure comprises 221 residues: Adenylate kinase (221 aa).

Position 10 to 15 (10 to 15 (GAGKGT)) interacts with ATP. The segment at 30 to 59 (STGDMLRAAVKAGTEFGVAAKKIMDAGGLV) is NMP. Residues Thr-31, Arg-36, 57–59 (GLV), 85–88 (GFPR), and Gln-92 contribute to the AMP site. An LID region spans residues 122 to 159 (GRRVHPASGRTYHIKYNPPKVEGKDDVTGDALIQRDDD). ATP is bound by residues Arg-123 and 132-133 (TY). Residues Arg-156 and Arg-167 each contribute to the AMP site. Residue Gly-207 coordinates ATP.

This sequence belongs to the adenylate kinase family. In terms of assembly, monomer.

The protein localises to the cytoplasm. The enzyme catalyses AMP + ATP = 2 ADP. The protein operates within purine metabolism; AMP biosynthesis via salvage pathway; AMP from ADP: step 1/1. Catalyzes the reversible transfer of the terminal phosphate group between ATP and AMP. Plays an important role in cellular energy homeostasis and in adenine nucleotide metabolism. The sequence is that of Adenylate kinase from Polynucleobacter asymbioticus (strain DSM 18221 / CIP 109841 / QLW-P1DMWA-1) (Polynucleobacter necessarius subsp. asymbioticus).